We begin with the raw amino-acid sequence, 203 residues long: Small ribosomal subunit protein uS10m (203 aa).

Residues 1–14 constitute a mitochondrion transit peptide; it reads MLRNTIALRSFIRT. Phosphoserine is present on Ser193.

Belongs to the universal ribosomal protein uS10 family. In terms of assembly, component of the mitochondrial small ribosomal subunit (mt-SSU). Mature yeast 74S mitochondrial ribosomes consist of a small (37S) and a large (54S) subunit. The 37S small subunit contains a 15S ribosomal RNA (15S mt-rRNA) and 34 different proteins. The 54S large subunit contains a 21S rRNA (21S mt-rRNA) and 46 different proteins.

The protein resides in the mitochondrion. Functionally, component of the mitochondrial ribosome (mitoribosome), a dedicated translation machinery responsible for the synthesis of mitochondrial genome-encoded proteins, including at least some of the essential transmembrane subunits of the mitochondrial respiratory chain. The mitoribosomes are attached to the mitochondrial inner membrane and translation products are cotranslationally integrated into the membrane. The protein is Small ribosomal subunit protein uS10m (RSM10) of Saccharomyces cerevisiae (strain ATCC 204508 / S288c) (Baker's yeast).